The sequence spans 250 residues: Pyrroloquinoline-quinone synthase (250 aa).

This sequence belongs to the PqqC family.

The enzyme catalyses 6-(2-amino-2-carboxyethyl)-7,8-dioxo-1,2,3,4,7,8-hexahydroquinoline-2,4-dicarboxylate + 3 O2 = pyrroloquinoline quinone + 2 H2O2 + 2 H2O + H(+). It functions in the pathway cofactor biosynthesis; pyrroloquinoline quinone biosynthesis. Functionally, ring cyclization and eight-electron oxidation of 3a-(2-amino-2-carboxyethyl)-4,5-dioxo-4,5,6,7,8,9-hexahydroquinoline-7,9-dicarboxylic-acid to PQQ. The chain is Pyrroloquinoline-quinone synthase from Xanthomonas oryzae pv. oryzae (strain KACC10331 / KXO85).